The sequence spans 478 residues: BUB3-interacting and GLEBS motif-containing protein ZNF207 (478 aa).

The interval 1–92 (MGRKKKKQLK…EGIPEKDMDE (92 aa)) is microtubule-binding region. 2 C2H2-type zinc fingers span residues 11–34 (PWCW…KAKH) and 35–58 (FKCH…MQVH). The segment covering 99 to 111 (QKTQESQKKKQQD) has biased composition (basic and acidic residues). 4 disordered regions span residues 99 to 157 (QKTQ…PGMP), 238 to 276 (APTA…SNSE), 300 to 362 (VGTD…ATSK), and 384 to 478 (RNLP…GGRY). The span at 112 to 121 (DSDEYDDDDS) shows a compositional bias: acidic residues. The span at 127-136 (FQPQPVQPQQ) shows a compositional bias: polar residues. Positions 142 to 157 (MAQPGLPPVPGAPGMP) are enriched in pro residues. 3 stretches are compositionally biased toward low complexity: residues 267 to 276 (SSSTASSNSE), 310 to 362 (TPAT…ATSK), and 433 to 446 (QGMP…MPPY). Residues 359-391 (ATSKLIHPDEDISLEERRAQLPKYQRNLPRPGQ) are GLEBS. The span at 447 to 467 (GQGPPMVPPYQGGPPRPPMGM) shows a compositional bias: pro residues.

In terms of assembly, interacts (via GLEBS region) with BUB3. Ubiquitous.

The protein localises to the nucleus. The protein resides in the chromosome. It is found in the centromere. It localises to the kinetochore. Its subcellular location is the cytoplasm. The protein localises to the cytoskeleton. The protein resides in the spindle. Functionally, kinetochore- and microtubule-binding protein that plays a key role in spindle assembly. ZNF207/BuGZ is mainly composed of disordered low-complexity regions and undergoes phase transition or coacervation to form temperature-dependent liquid droplets. Coacervation promotes microtubule bundling and concentrates tubulin, promoting microtubule polymerization and assembly of spindle and spindle matrix by concentrating its building blocks. Also acts as a regulator of mitotic chromosome alignment by mediating the stability and kinetochore loading of BUB3. Mechanisms by which BUB3 is protected are unclear: according to a first report, ZNF207/BuGZ may act by blocking ubiquitination and proteasomal degradation of BUB3. According to another report, the stabilization is independent of the proteasome. This chain is BUB3-interacting and GLEBS motif-containing protein ZNF207, found in Homo sapiens (Human).